The primary structure comprises 416 residues: Proline-serine-threonine phosphatase-interacting protein 1 (416 aa).

The F-BAR domain occupies 5-264; that stretch reads LQFKDAFWCR…TLEGCSIDAD (260 aa). A coiled-coil region spans residues 166-212; the sequence is HQKQVEKSQNKARQCKDSATEAERVYRQSIAQLEKVRAEWEQEHRTT. At Ser-318 the chain carries Phosphoserine. Tyr-345 carries the post-translational modification Phosphotyrosine. The 58-residue stretch at 359-416 folds into the SH3 domain; the sequence is SPAQEYRALYDYTAQNPDELDLSAGDILEVILEGEDGWWTVERNGQRGFVPGSYLEKL.

In terms of assembly, homodimer. Homotrimer. Interacts (via coiled-coil domain) with CD2AP, PTPN12 and PTPN18. Interacts (via SH3 domain) with ABL1 and WAS. Interacts (via SH3 and coiled-coil domains) with MEFV (via B-box zinc finger); the interaction allows binding of MEFV to PYCARD and facilitates formation of PYCARD pyroptosomes. Interacts with CD2, DNM2 and FASLG. Dephosphorylated on Tyr-345 by PTPN18, this event negatively regulates the association of PSTPIP1 with SH2 domain-containing proteins as tyrosine kinase. Phosphorylation of Tyr-345 is probably required for subsequent phosphorylation at other tyrosine residues. Phosphorylation is induced by activation of the EGFR and PDGFR in a ABL1 dependent manner. The phosphorylation regulates the interaction with WAS and with MEFV. As to expression, highly expressed in the peripheral blood leukocytes, granulocytes and monocytes, namely in T-cells and natural killer cells, and in spleen. Weakly expressed in the thymus, small intestine, lung and placenta.

The protein resides in the cytoplasm. Its subcellular location is the cell membrane. The protein localises to the cell projection. It localises to the uropodium. It is found in the cytoskeleton. The protein resides in the perinuclear region. Its subcellular location is the lamellipodium. The protein localises to the cleavage furrow. In terms of biological role, involved in regulation of the actin cytoskeleton. May regulate WAS actin-bundling activity. Bridges the interaction between ABL1 and PTPN18 leading to ABL1 dephosphorylation. May play a role as a scaffold protein between PTPN12 and WAS and allow PTPN12 to dephosphorylate WAS. Has the potential to physically couple CD2 and CD2AP to WAS. Acts downstream of CD2 and CD2AP to recruit WAS to the T-cell:APC contact site so as to promote the actin polymerization required for synapse induction during T-cell activation. Down-regulates CD2-stimulated adhesion through the coupling of PTPN12 to CD2. Also has a role in innate immunity and the inflammatory response. Recruited to inflammasomes by MEFV. Induces formation of pyroptosomes, large supramolecular structures composed of oligomerized PYCARD dimers which form prior to inflammatory apoptosis. Binding to MEFV allows MEFV to bind to PYCARD and facilitates pyroptosome formation. Regulates endocytosis and cell migration in neutrophils. This is Proline-serine-threonine phosphatase-interacting protein 1 (PSTPIP1) from Homo sapiens (Human).